Here is a 109-residue protein sequence, read N- to C-terminus: Staphostatin B (109 aa).

The binds to staphopain B stretch occupies residues 97–101 (IGTSR).

This sequence belongs to the protease inhibitor I57 (SspC) family. As to quaternary structure, forms a stable non-covalent complex with prematurely activated/folded SspB.

The protein localises to the cytoplasm. Functionally, specifically inhibits the cysteine protease staphopain B (SspB) by blocking the active site of the enzyme. Probably required to protect cytoplasmic proteins from being degraded by prematurely activated/folded prostaphopain B. Also involved in growth capacity, viability and bacterial morphology. In Staphylococcus aureus (strain NCTC 8325 / PS 47), this protein is Staphostatin B (sspC).